Here is a 115-residue protein sequence, read N- to C-terminus: Large ribosomal subunit protein bL19 (115 aa).

It belongs to the bacterial ribosomal protein bL19 family.

This protein is located at the 30S-50S ribosomal subunit interface and may play a role in the structure and function of the aminoacyl-tRNA binding site. This Salmonella choleraesuis (strain SC-B67) protein is Large ribosomal subunit protein bL19.